The following is a 292-amino-acid chain: MANLKALKVRIGSVKNTRQITKAMKMVAAAKLRKATEQAESARPYSKRMSRMMHSLAPAAAGRDNAPELLVGRGDVKKVNLVVYTADRGLCGSFNSVVIRATRARIAELEKQGFQVMLTFIGRKAYDVLKRSHGHLVRKVYTEMSRHMSFAYVEKNIVKELIKDFHEGQFDACYLVFNQFKSAMSQELTWAQSIPQPIDTEGASTQTGYQFEPVEEELLEELLPRNLAVQVFQALAESEASEHGSRMTAMDNAVRNAGDMVKKLQTKYNRSRQAAITTELIEIISGAESLKG.

The protein belongs to the ATPase gamma chain family. F-type ATPases have 2 components, CF(1) - the catalytic core - and CF(0) - the membrane proton channel. CF(1) has five subunits: alpha(3), beta(3), gamma(1), delta(1), epsilon(1). CF(0) has three main subunits: a, b and c.

It localises to the cell inner membrane. Its function is as follows. Produces ATP from ADP in the presence of a proton gradient across the membrane. The gamma chain is believed to be important in regulating ATPase activity and the flow of protons through the CF(0) complex. In Magnetococcus marinus (strain ATCC BAA-1437 / JCM 17883 / MC-1), this protein is ATP synthase gamma chain.